The sequence spans 121 residues: Aspartate 1-decarboxylase (121 aa).

Residue Ser25 is the Schiff-base intermediate with substrate; via pyruvic acid of the active site. The residue at position 25 (Ser25) is a Pyruvic acid (Ser). Thr57 is a binding site for substrate. Tyr58 (proton donor) is an active-site residue. Residue 73–75 coordinates substrate; sequence GAA.

Belongs to the PanD family. As to quaternary structure, heterooctamer of four alpha and four beta subunits. It depends on pyruvate as a cofactor. Post-translationally, is synthesized initially as an inactive proenzyme, which is activated by self-cleavage at a specific serine bond to produce a beta-subunit with a hydroxyl group at its C-terminus and an alpha-subunit with a pyruvoyl group at its N-terminus.

It localises to the cytoplasm. It catalyses the reaction L-aspartate + H(+) = beta-alanine + CO2. Its pathway is cofactor biosynthesis; (R)-pantothenate biosynthesis; beta-alanine from L-aspartate: step 1/1. Its function is as follows. Catalyzes the pyruvoyl-dependent decarboxylation of aspartate to produce beta-alanine. This is Aspartate 1-decarboxylase from Sulfurimonas denitrificans (strain ATCC 33889 / DSM 1251) (Thiomicrospira denitrificans (strain ATCC 33889 / DSM 1251)).